Reading from the N-terminus, the 317-residue chain is Sulfate adenylyltransferase subunit 2 (317 aa).

Disordered stretches follow at residues 1-21 (MPDS…APLD) and 298-317 (RAID…EGYF).

The protein belongs to the PAPS reductase family. CysD subfamily. In terms of assembly, heterodimer composed of CysD, the smaller subunit, and CysN.

The catalysed reaction is sulfate + ATP + H(+) = adenosine 5'-phosphosulfate + diphosphate. It participates in sulfur metabolism; hydrogen sulfide biosynthesis; sulfite from sulfate: step 1/3. Functionally, with CysN forms the ATP sulfurylase (ATPS) that catalyzes the adenylation of sulfate producing adenosine 5'-phosphosulfate (APS) and diphosphate, the first enzymatic step in sulfur assimilation pathway. APS synthesis involves the formation of a high-energy phosphoric-sulfuric acid anhydride bond driven by GTP hydrolysis by CysN coupled to ATP hydrolysis by CysD. In Rhizobium etli (strain ATCC 51251 / DSM 11541 / JCM 21823 / NBRC 15573 / CFN 42), this protein is Sulfate adenylyltransferase subunit 2.